The sequence spans 493 residues: Angiopoietin-related protein 2 (493 aa).

The signal sequence occupies residues 1–22 (MRPLCVTCWWLGLLAAMGAVAG). Coiled coils occupy residues 76–115 (PEVL…VDGG) and 152–206 (ALEL…HCQR). N-linked (GlcNAc...) asparagine glycans are attached at residues Asn164 and Asn192. Positions 269–489 (DKPSGPWRDC…KVVMMIRPNP (221 aa)) constitute a Fibrinogen C-terminal domain. Disulfide bonds link Cys278–Cys307 and Cys430–Cys443.

In terms of processing, N-glycosylated. As to expression, widely expressed in heart, small intestine, spleen and stomach. Also found in lower levels in colon, ovary, adrenal gland, skeletal muscle and in prostate.

Its subcellular location is the secreted. Induces sprouting in endothelial cells through an autocrine and paracrine action. The protein is Angiopoietin-related protein 2 (ANGPTL2) of Homo sapiens (Human).